The following is a 115-amino-acid chain: Large ribosomal subunit protein bL20 (115 aa).

The protein belongs to the bacterial ribosomal protein bL20 family.

Functionally, binds directly to 23S ribosomal RNA and is necessary for the in vitro assembly process of the 50S ribosomal subunit. It is not involved in the protein synthesizing functions of that subunit. In Prochlorococcus marinus (strain MIT 9515), this protein is Large ribosomal subunit protein bL20.